A 181-amino-acid polypeptide reads, in one-letter code: Acireductone dioxygenase (181 aa).

4 residues coordinate Fe(2+): H97, H99, E103, and H141. Positions 97, 99, 103, and 141 each coordinate Ni(2+).

Belongs to the acireductone dioxygenase (ARD) family. In terms of assembly, monomer. Requires Fe(2+) as cofactor. The cofactor is Ni(2+).

The catalysed reaction is 1,2-dihydroxy-5-(methylsulfanyl)pent-1-en-3-one + O2 = 3-(methylsulfanyl)propanoate + CO + formate + 2 H(+). It carries out the reaction 1,2-dihydroxy-5-(methylsulfanyl)pent-1-en-3-one + O2 = 4-methylsulfanyl-2-oxobutanoate + formate + 2 H(+). The protein operates within amino-acid biosynthesis; L-methionine biosynthesis via salvage pathway; L-methionine from S-methyl-5-thio-alpha-D-ribose 1-phosphate: step 5/6. In terms of biological role, catalyzes 2 different reactions between oxygen and the acireductone 1,2-dihydroxy-3-keto-5-methylthiopentene (DHK-MTPene) depending upon the metal bound in the active site. Fe-containing acireductone dioxygenase (Fe-ARD) produces formate and 2-keto-4-methylthiobutyrate (KMTB), the alpha-ketoacid precursor of methionine in the methionine recycle pathway. Ni-containing acireductone dioxygenase (Ni-ARD) produces methylthiopropionate, carbon monoxide and formate, and does not lie on the methionine recycle pathway. This chain is Acireductone dioxygenase, found in Pseudomonas syringae pv. tomato (strain ATCC BAA-871 / DC3000).